The primary structure comprises 185 residues: Acireductone dioxygenase (185 aa).

Positions 1-23 (MSRLSIHPEGNTNATSPAEPLLE) are disordered. His-102, His-104, Glu-108, and His-146 together coordinate Fe(2+). Ni(2+)-binding residues include His-102, His-104, Glu-108, and His-146.

This sequence belongs to the acireductone dioxygenase (ARD) family. Monomer. Fe(2+) serves as cofactor. Requires Ni(2+) as cofactor.

The enzyme catalyses 1,2-dihydroxy-5-(methylsulfanyl)pent-1-en-3-one + O2 = 3-(methylsulfanyl)propanoate + CO + formate + 2 H(+). It carries out the reaction 1,2-dihydroxy-5-(methylsulfanyl)pent-1-en-3-one + O2 = 4-methylsulfanyl-2-oxobutanoate + formate + 2 H(+). Its pathway is amino-acid biosynthesis; L-methionine biosynthesis via salvage pathway; L-methionine from S-methyl-5-thio-alpha-D-ribose 1-phosphate: step 5/6. Catalyzes 2 different reactions between oxygen and the acireductone 1,2-dihydroxy-3-keto-5-methylthiopentene (DHK-MTPene) depending upon the metal bound in the active site. Fe-containing acireductone dioxygenase (Fe-ARD) produces formate and 2-keto-4-methylthiobutyrate (KMTB), the alpha-ketoacid precursor of methionine in the methionine recycle pathway. Ni-containing acireductone dioxygenase (Ni-ARD) produces methylthiopropionate, carbon monoxide and formate, and does not lie on the methionine recycle pathway. The sequence is that of Acireductone dioxygenase from Prochlorococcus marinus (strain MIT 9303).